We begin with the raw amino-acid sequence, 942 residues long: Protein FAM184B (942 aa).

2 disordered regions span residues 1 to 26 (MASALNSKIHPPGTCASSKADARGGS) and 73 to 97 (QEDLQDTGAETRTRLPQEQSRTSED). Coiled-coil stretches lie at residues 89–150 (QEQS…RVLI), 196–337 (EMHQ…DRLM), and 387–495 (SETQ…SLLE). Positions 486-542 (STKLQNSLLEDPCSRPKKPARDEGLEKLTDEEESSSDEEERTGESVKGKSDLQPPFE) are disordered. Residues 504–513 (PARDEGLEKL) show a composition bias toward basic and acidic residues. Over residues 514–526 (TDEEESSSDEEER) the composition is skewed to acidic residues. 2 coiled-coil regions span residues 575-619 (NKDS…ESLR) and 686-815 (EKGL…ERRF). Residues 880–934 (APPITKSPSLDPSPSCSQPYKPTQLLDGKTASRTQDGEPAQPKEAPQKQGSPHQE) are disordered. The segment covering 885 to 900 (KSPSLDPSPSCSQPYK) has biased composition (polar residues).

This sequence belongs to the FAM184 family.

In Mus musculus (Mouse), this protein is Protein FAM184B (Fam184b).